A 1441-amino-acid polypeptide reads, in one-letter code: Histone-lysine N-methyltransferase SETD5 (1441 aa).

The disordered stretch occupies residues 1–28; it reads MSIAIPLGVTTPDTSYSDMAAGSDPESV. Leucine 70 bears the Phosphothreonine mark. A phosphoserine mark is found at serine 72 and valine 74. Residues 156 to 202 form a disordered region; sequence TPTSITLTVRRTKPKKRKKSPEKGRAAPKTKKIKNSPSEAQNLDENT. Over residues 165–189 the composition is skewed to basic residues; it reads RRTKPKKRKKSPEKGRAAPKTKKIK. A compositionally biased stretch (polar residues) spans 190 to 202; the sequence is NSPSEAQNLDENT. One can recognise an SET domain in the interval 269 to 390; sequence MQLQLGRVTR…KDAEVTIAFD (122 aa). 2 disordered regions span residues 417 to 683 and 793 to 816; these read NPNA…TVIS and MTQTSSVPQETRTQHLYQSNETSN. 2 stretches are compositionally biased toward acidic residues: residues 450–461 and 479–501; these read LEQQNEVPEENP and EEVDNPEEKPEEEEKEEATDDQE. Composition is skewed to low complexity over residues 539-552 and 561-572; these read SSSDIEITTSSSEI and AAPESEVSSPVS. Polar residues predominate over residues 575 to 588; that stretch reads AIPSTPQSTGVNTR. Over residues 611-621 the composition is skewed to basic residues; it reads SRPRPKSRISR. The segment covering 635-650 has biased composition (low complexity); the sequence is QAIAQQAELSQAALEE. The segment covering 652-683 has biased composition (polar residues); it reads GSNNSVTPPEAGNTDSSGENRQLTGSDPTVIS. 2 positions are modified to phosphoserine: serine 829 and serine 852. 3 disordered regions span residues 849–883, 1036–1228, and 1243–1441; these read QPLSPVTPPPPSSGSKSPQLTTPGQTHPGEEECRN, DLSR…SKGA, and CDSP…TGLS. Threonine 855 carries the phosphothreonine modification. The span at 1062–1076 shows a compositional bias: basic residues; that stretch reads QRKKVSLLEYRKRKQ. Residues 1087–1107 show a composition bias toward low complexity; sequence DSSQSKSKSSGAGQGSSNSVS. Residues 1144–1163 show a composition bias toward polar residues; the sequence is PSDSRGTSSSHCRPQENISS. The residue at position 1197 (serine 1197) is a Phosphoserine. Over residues 1250-1259 the composition is skewed to low complexity; sequence SQSLLQQSSS. Residues 1265-1275 show a composition bias toward polar residues; that stretch reads PTQSPGYSYRT. The span at 1284-1300 shows a compositional bias: low complexity; the sequence is PSHGSSESSLSSTSYPS. Residues 1319-1333 are compositionally biased toward polar residues; that stretch reads YYSSQPHSGNSTGSN. The span at 1335–1372 shows a compositional bias: low complexity; that stretch reads PRRSCSSSAASPTPQGPSDSPTSDSVSQSSTGTLSSTS. Polar residues-rich tracts occupy residues 1373–1382, 1389–1412, and 1429–1441; these read FPQNSRSSLP, SLPNAGQSAAYQASRVSAVSNSQH, and LQGSGVKTQTGLS.

Interacts with components of the PAF1 complex (PAF1C) such as LEO1, CTR9 and CDC73. Interacts with NCOR1. Interacts with HDAC3. As to expression, ubiquitously expressed.

Its subcellular location is the nucleus. It localises to the chromosome. It carries out the reaction L-lysyl(9)-[histone H3] + S-adenosyl-L-methionine = N(6)-methyl-L-lysyl(9)-[histone H3] + S-adenosyl-L-homocysteine + H(+). The enzyme catalyses L-lysyl(36)-[histone H3] + 3 S-adenosyl-L-methionine = N(6),N(6),N(6)-trimethyl-L-lysyl(36)-[histone H3] + 3 S-adenosyl-L-homocysteine + 3 H(+). In terms of biological role, chromatin regulator required for brain development: acts as a regulator of RNA elongation rate, thereby regulating neural stem cell (NSC) proliferation and synaptic transmission. May act by mediating trimethylation of 'Lys-36' of histone H3 (H3K36me3), which is essential to allow on-time RNA elongation dynamics. Also monomethylates 'Lys-9' of histone H3 (H3K9me1) in vitro. The relevance of histone methyltransferase activity is however subject to discussion. The polypeptide is Histone-lysine N-methyltransferase SETD5 (Mus musculus (Mouse)).